Consider the following 737-residue polypeptide: UPF0507 protein YML002W (737 aa).

Residues 1 to 83 (MDSHQLELPD…FEDFNKNTGN (83 aa)) enclose the VPS9 domain.

Belongs to the UPF0507 family.

The protein is UPF0507 protein YML002W of Saccharomyces cerevisiae (strain ATCC 204508 / S288c) (Baker's yeast).